Reading from the N-terminus, the 458-residue chain is Cytoplasmic tRNA 2-thiolation protein 2 (458 aa).

It belongs to the CTU2/NCS2 family.

The protein resides in the cytoplasm. It participates in tRNA modification; 5-methoxycarbonylmethyl-2-thiouridine-tRNA biosynthesis. Its function is as follows. Plays a central role in 2-thiolation of mcm(5)S(2)U at tRNA wobble positions of tRNA(Lys), tRNA(Glu) and tRNA(Gln). May act by forming a heterodimer with NCS6/CTU1 that ligates sulfur from thiocarboxylated URM1 onto the uridine of tRNAs at wobble position. This Arabidopsis thaliana (Mouse-ear cress) protein is Cytoplasmic tRNA 2-thiolation protein 2.